The primary structure comprises 216 residues: uncharacterized protein (216 aa).

A helical transmembrane segment spans residues 39-59 (VLPLTFIGSLLILILTIVYYF). Positions 59–108 (FTLSGSVNELKNEISKEKSKKERLLSEIKRLEELKKTLETKKAIYEVVKI) form a coiled coil.

The protein localises to the membrane. This is an uncharacterized protein from Aquifex aeolicus (strain VF5).